The following is a 265-amino-acid chain: UPF0354 protein GTNG_2723 (265 aa).

This sequence belongs to the UPF0354 family.

In Geobacillus thermodenitrificans (strain NG80-2), this protein is UPF0354 protein GTNG_2723.